The following is a 255-amino-acid chain: Staphylococcal secretory antigen ssaA1 (255 aa).

An N-terminal signal peptide occupies residues M1 to A26. 3 tandem repeats follow at residues Y75 to Y78, Y88 to Y91, and Y98 to Y101. The segment at Y75–Y101 is 3 X 4 AA repeats of Y-N-N-Y. Residues A134–H255 form the Peptidase C51 domain.

The protein localises to the secreted. Its function is as follows. Not known; immunogenic protein. This Staphylococcus aureus (strain MW2) protein is Staphylococcal secretory antigen ssaA1 (ssaA1).